A 247-amino-acid polypeptide reads, in one-letter code: Probable transcriptional regulatory protein LAF_0541 (247 aa).

The tract at residues 1–22 (MSGHSKWHNIQGRKNAQDAKRG) is disordered.

Belongs to the TACO1 family.

It is found in the cytoplasm. This is Probable transcriptional regulatory protein LAF_0541 from Limosilactobacillus fermentum (strain NBRC 3956 / LMG 18251) (Lactobacillus fermentum).